We begin with the raw amino-acid sequence, 146 residues long: Large ribosomal subunit protein uL15 (146 aa).

Positions 1-46 (MKLHELQPAPGSRKKAVRVGRGIGSGNGKTAGRGHKGQKARSGGGV) are disordered. Over residues 21–31 (RGIGSGNGKTA) the composition is skewed to gly residues.

The protein belongs to the universal ribosomal protein uL15 family. Part of the 50S ribosomal subunit.

Functionally, binds to the 23S rRNA. The protein is Large ribosomal subunit protein uL15 of Geobacillus thermodenitrificans (strain NG80-2).